Reading from the N-terminus, the 101-residue chain is Acylphosphatase-1 (101 aa).

S2 carries the N-acetylserine modification. Residue S2 is modified to N-acetylalanine. Residues 11–101 (SVDYEIFGKV…LDYTDFQIVK (91 aa)) enclose the Acylphosphatase-like domain. Catalysis depends on residues R26 and N44.

This sequence belongs to the acylphosphatase family. In terms of tissue distribution, organ-common type isozyme is found in many different tissues.

It catalyses the reaction an acyl phosphate + H2O = a carboxylate + phosphate + H(+). This Bos taurus (Bovine) protein is Acylphosphatase-1 (ACYP1).